The primary structure comprises 283 residues: Gap junction beta-1 protein (283 aa).

The Cytoplasmic portion of the chain corresponds to M1 to R22. A helical transmembrane segment spans residues V23 to G45. Over D46–R75 the chain is Extracellular. The helical transmembrane segment at L76–V95 threads the bilayer. Topologically, residues A96–T130 are cytoplasmic. A helical transmembrane segment spans residues L131–F153. The Extracellular portion of the chain corresponds to Y154 to T191. Residues V192 to I214 form a helical membrane-spanning segment. The Cytoplasmic portion of the chain corresponds to R215–C283. A phosphoserine mark is found at S233, S258, S266, and S277.

This sequence belongs to the connexin family. Beta-type (group I) subfamily. As to quaternary structure, a connexon is composed of a hexamer of connexins. Interacts with CNST.

Its subcellular location is the cell membrane. It is found in the cell junction. It localises to the gap junction. One gap junction consists of a cluster of closely packed pairs of transmembrane channels, the connexons, through which materials of low MW diffuse from one cell to a neighboring cell. In Macaca fascicularis (Crab-eating macaque), this protein is Gap junction beta-1 protein (GJB1).